Reading from the N-terminus, the 1098-residue chain is PAN2-PAN3 deadenylation complex catalytic subunit PAN2 (1098 aa).

WD repeat units follow at residues 19–58 (ASKD…PFQL), 150–190 (TGFD…SVKS), 253–293 (PFPN…KLNV), and 300–338 (PASP…NFVN). A linker region spans residues 340-466 (PAPLEEQDIP…SIFHLKSPTS (127 aa)). The disordered stretch occupies residues 417–442 (RNISQPYQSLREPPGSNSNAPRFISE). Residues 466-839 (SVPHCYSRLQ…KPVIIVYSEP (374 aa)) form the USP domain. The Exonuclease domain occupies 894–1067 (IAIDAEFVVS…EDAYTALMLF (174 aa)). Residues Asp897, Glu899, Asp1006, and Asp1059 each contribute to the a divalent metal cation site.

Belongs to the peptidase C19 family. PAN2 subfamily. Forms a heterotrimer with an asymmetric homodimer of the regulatory subunit PAN3 to form the poly(A)-nuclease (PAN) deadenylation complex. Requires a divalent metal cation as cofactor.

Its subcellular location is the cytoplasm. The enzyme catalyses Exonucleolytic cleavage of poly(A) to 5'-AMP.. With respect to regulation, positively regulated by the regulatory subunit PAN3. Catalytic subunit of the poly(A)-nuclease (PAN) deadenylation complex, one of two cytoplasmic mRNA deadenylases involved in mRNA turnover. PAN specifically shortens poly(A) tails of RNA and the activity is stimulated by poly(A)-binding protein PAB1. PAN deadenylation is followed by rapid degradation of the shortened mRNA tails by the CCR4-NOT complex. Deadenylated mRNAs are then degraded by two alternative mechanisms, namely exosome-mediated 3'-5' exonucleolytic degradation, or deadenylation-dependent mRNA decaping and subsequent 5'-3' exonucleolytic degradation by XRN1. May also be involved in post-transcriptional maturation of mRNA poly(A) tails. The sequence is that of PAN2-PAN3 deadenylation complex catalytic subunit PAN2 from Meyerozyma guilliermondii (strain ATCC 6260 / CBS 566 / DSM 6381 / JCM 1539 / NBRC 10279 / NRRL Y-324) (Yeast).